The primary structure comprises 78 residues: MSRVCQVTGKRPVSGNNRSHALNATKRRFLPNLHSHRFWVESEKRFVTLRVSAKGMRVIDKKGIESVLADLRARGEKY.

This sequence belongs to the bacterial ribosomal protein bL28 family.

The polypeptide is Large ribosomal subunit protein bL28 (Proteus mirabilis (strain HI4320)).